The sequence spans 81 residues: Cytotoxin 3b (81 aa).

Residues 1-21 (MKTLLLTLVVVTIVCLDLGYT) form the signal peptide. Intrachain disulfides connect Cys-24–Cys-42, Cys-35–Cys-59, Cys-63–Cys-74, and Cys-75–Cys-80.

This sequence belongs to the three-finger toxin family. Short-chain subfamily. Type IA cytotoxin sub-subfamily. Monomer in solution; Homodimer and oligomer in the presence of negatively charged lipids forming a pore with a size ranging between 20 and 30 Angstroms. In terms of tissue distribution, expressed by the venom gland.

The protein resides in the secreted. It localises to the target cell membrane. Its function is as follows. Shows cytolytic activity on many different cells by forming pore in lipid membranes. In vivo, increases heart rate or kills the animal by cardiac arrest. In addition, it binds to heparin with high affinity, interacts with Kv channel-interacting protein 1 (KCNIP1) in a calcium-independent manner, and binds to integrin alpha-V/beta-3 (ITGAV/ITGB3) with moderate affinity. The sequence is that of Cytotoxin 3b from Naja atra (Chinese cobra).